A 229-amino-acid polypeptide reads, in one-letter code: Ribonuclease 3 (229 aa).

The RNase III domain occupies L5–G127. Residue E40 participates in Mg(2+) binding. Residue D44 is part of the active site. The Mg(2+) site is built by D113 and E116. E116 is a catalytic residue. Residues D154–V224 form the DRBM domain.

The protein belongs to the ribonuclease III family. As to quaternary structure, homodimer. The cofactor is Mg(2+).

The protein localises to the cytoplasm. The catalysed reaction is Endonucleolytic cleavage to 5'-phosphomonoester.. In terms of biological role, digests double-stranded RNA. Involved in the processing of primary rRNA transcript to yield the immediate precursors to the large and small rRNAs (23S and 16S). Processes some mRNAs, and tRNAs when they are encoded in the rRNA operon. Processes pre-crRNA and tracrRNA of type II CRISPR loci if present in the organism. The chain is Ribonuclease 3 from Azotobacter vinelandii (strain DJ / ATCC BAA-1303).